The following is a 273-amino-acid chain: Proteasome subunit beta type-7-A (273 aa).

A propeptide spans 1–37 (MSQSTVDVPPKGGFSFDLCKRNDMLTQKGLKAPSFLK) (removed in mature form). The active-site Nucleophile is threonine 40.

The protein belongs to the peptidase T1B family. Component of the 20S core complex of the 26S proteasome. The 26S proteasome is composed of a core protease (CP), known as the 20S proteasome, capped at one or both ends by the 19S regulatory particle (RP/PA700). The 20S proteasome core is composed of 28 subunits that are arranged in four stacked rings, resulting in a barrel-shaped structure. The two end rings are each formed by seven alpha subunits, and the two central rings are each formed by seven beta subunits. The catalytic chamber with the active sites is on the inside of the barrel.

It localises to the cytoplasm. Its subcellular location is the nucleus. It carries out the reaction Cleavage of peptide bonds with very broad specificity.. The proteasome is a multicatalytic proteinase complex which is characterized by its ability to cleave peptides with Arg, Phe, Tyr, Leu, and Glu adjacent to the leaving group at neutral or slightly basic pH. The proteasome has an ATP-dependent proteolytic activity. This chain is Proteasome subunit beta type-7-A (PBB1), found in Arabidopsis thaliana (Mouse-ear cress).